We begin with the raw amino-acid sequence, 931 residues long: Up-regulator of cell proliferation (931 aa).

S3 is subject to Phosphoserine. One can recognise a VLIG-type G domain in the interval 689 to 929 (RSRLVVLSTV…NIQQLIELVR (241 aa)).

This sequence belongs to the TRAFAC class dynamin-like GTPase superfamily. Very large inducible GTPase (VLIG) family. Strongly expressed in hepatitis B virus-infected liver and in HCC cells. Also highly expressed in well-differentiated gastric cancer tissues and various gastric cancer cell lines.

The protein resides in the cytoplasm. Its subcellular location is the nucleus. In terms of biological role, may be involved in cell cycle progression through the regulation of cyclin D1 expression. May participate in the development of hepatocellular carcinoma (HCC) by promoting hepatocellular growth and survival. May play an important role in development of gastric cancer. The chain is Up-regulator of cell proliferation (URGCP) from Homo sapiens (Human).